The chain runs to 251 residues: Eukaryotic translation initiation factor 4E-3 (251 aa).

Residues 200 to 251 (DSSARTSSTVKPRICLPAKDPAPVKEKGPAATTSPSNPGTEATGTSPATPTP) form a disordered region. Residues 230–251 (ATTSPSNPGTEATGTSPATPTP) show a composition bias toward polar residues.

It belongs to the eukaryotic initiation factor 4E family. As to quaternary structure, eIF4F is a multi-subunit complex, the composition of which varies with external and internal environmental conditions. It is composed of at least eIF4A, eIF4E and eIF4G. eIF4E is also known to interact with other partners. Interacts with mxt. Component of the pid-1 variant of the PETISCO complex (also called the pid-3, erh-2, tofu-6, and ife-3 small RNA complex) containing at least pid-1, tofu-6, ife-3, pid-3, and erh-2, which is required for the biogenesis of a class of 21 nucleotide PIWI-interacting RNAs (piRNAs) that possess a uracil residue at the 5'-end (also called 21U-RNAs). Component of the tost-1 variant of the PETISCO complex (also called the pid-3, erh-2, tofu-6, and ife-3 small RNA complex) containing at least tost-1, tofu-6, ife-3, pid-3, and erh-2, which plays an essential role in embryogenesis. Within the pid-1 and tost-1 variants of the PETISCO complexes interacts with tofu-6 (via C-terminus). In contrast to the pid-1 variant of the PETISCO complex, the tost-1 variant of the PETISCO complex plays a minor role in the biogenesis of 21U-RNAs. In terms of tissue distribution, highly expressed in the germline (at protein level).

It is found in the cytoplasmic granule. The protein resides in the cytoplasm. The protein localises to the perinuclear region. Its function is as follows. Recognizes and binds the 7-methylguanosine-containing mRNA cap during an early step in the initiation of protein synthesis and facilitates ribosome binding by inducing the unwinding of the mRNAs secondary structures. All 5 eIF4E proteins bind monomethyl cap structures. Only ife-1, ife-2 and ife-5 bind trimethyl cap structures which result from trans-splicing. Translation of trimethyl cap structure mRNAs may be regulated by intracellular redox state; disulfide bonds change the width and depth of the cap-binding cavity determining selectivity to mRNA caps. Ife-3 is essential for viability. Component of the pid-1 and tost-1 variants of the PETISCO complexes, which have roles in the biogenesis of a class of 21 nucleotide PIWI-interacting RNAs (piRNAs) that possess a uracil residue at the 5'-end (also called 21U-RNAs) and embryogenesis, respectively. Within the pid-1 variant of the PETISCO complex binds to capped 21U-RNA precursor molecules, possibly playing a role in the processing of the 5' end of the molecules to promote binding of other complex components such as pid-3. However, it is not essential for the biogenesis of 21U-RNAs by itself. Within the tost-1 variant of the PETISCO complex binds to splice leader SL1 RNA fragments to possibly play a role in their processing. In Caenorhabditis elegans, this protein is Eukaryotic translation initiation factor 4E-3.